The following is a 188-amino-acid chain: Peptidyl-tRNA hydrolase (188 aa).

Y15 is a tRNA binding site. H20 acts as the Proton acceptor in catalysis. Residues F66, N68, and N114 each contribute to the tRNA site.

This sequence belongs to the PTH family. As to quaternary structure, monomer.

It localises to the cytoplasm. The enzyme catalyses an N-acyl-L-alpha-aminoacyl-tRNA + H2O = an N-acyl-L-amino acid + a tRNA + H(+). Its function is as follows. Hydrolyzes ribosome-free peptidyl-tRNAs (with 1 or more amino acids incorporated), which drop off the ribosome during protein synthesis, or as a result of ribosome stalling. Functionally, catalyzes the release of premature peptidyl moieties from peptidyl-tRNA molecules trapped in stalled 50S ribosomal subunits, and thus maintains levels of free tRNAs and 50S ribosomes. This Lactococcus lactis subsp. lactis (strain IL1403) (Streptococcus lactis) protein is Peptidyl-tRNA hydrolase.